Here is a 565-residue protein sequence, read N- to C-terminus: Potassium-transporting ATPase potassium-binding subunit (565 aa).

Transmembrane regions (helical) follow at residues 6-26 (LMLL…LGSL), 63-83 (LLAI…LLMA), 132-152 (GLGV…FALI), 175-195 (LYVL…QGVI), 250-270 (LSNL…CFAF), 283-303 (LLWT…YAEL), 327-347 (FGIL…CGAV), 354-374 (FTAL…VVFG), 379-399 (GLYG…LMIG), 418-438 (ALAI…ALLC), 483-503 (LLLA…VMAI), and 524-544 (GALF…LTFI).

It belongs to the KdpA family. In terms of assembly, the system is composed of three essential subunits: KdpA, KdpB and KdpC.

It localises to the cell inner membrane. Part of the high-affinity ATP-driven potassium transport (or Kdp) system, which catalyzes the hydrolysis of ATP coupled with the electrogenic transport of potassium into the cytoplasm. This subunit binds the periplasmic potassium ions and delivers the ions to the membrane domain of KdpB through an intramembrane tunnel. This Edwardsiella ictaluri (strain 93-146) protein is Potassium-transporting ATPase potassium-binding subunit.